The primary structure comprises 412 residues: Vacuolar calcium ion transporter (412 aa).

Over 1-55 (MIERLKIAKNRLEAMNSFNFPAQDRHERAPLLGSEYDHSMARQLSLLNVVGMTKS) the chain is Cytoplasmic. Residues 56–76 (VLMSSYFNLMLVFVPIGLIAG) form a helical membrane-spanning segment. Residues 77–83 (WFEWNAK) lie on the Lumenal side of the membrane. A helical membrane pass occupies residues 84 to 104 (SVFILNMLAIIPLASLLSFAT). Topologically, residues 105 to 114 (EQLSIISGPT) are cytoplasmic. Residues 115–135 (LGALLNASFGNAIELIVGVLA) form a helical membrane-spanning segment. Residues 136–148 (LKRGELRIVQSSL) are Lumenal-facing. The chain crosses the membrane as a helical span at residues 149 to 169 (LGSILSNLLLVFGMCLVTTGI). The Cytoplasmic segment spans residues 170–177 (RREITTFN). A helical transmembrane segment spans residues 178–198 (ITVAQTMIAMLALSTATILIP). Over 199–215 (ATFHYSLPDNANSENAL) the chain is Lumenal. The chain crosses the membrane as a helical span at residues 216 to 236 (LHVSRGTAVIVLIVYVLLLVF). The Cytoplasmic portion of the chain corresponds to 237-264 (QLKTHKHVCHDPSEVEEETEPRILGLRS). The chain crosses the membrane as a helical span at residues 265 to 285 (SIAMLAIVTVFVSLCADYLVG). Topologically, residues 286–299 (SIDQLVEEVNISKT) are lumenal. Residues 300–320 (FVGLVILPVVGNAAEHVTAIV) traverse the membrane as a helical segment. At 321–334 (VSYRGQMDLALGVA) the chain is on the cytoplasmic side. A helical membrane pass occupies residues 335 to 355 (IGSSIQIALFLAPFLVIVGWI). The Lumenal portion of the chain corresponds to 356–358 (ISQ). Residues 359–379 (PLTLYFESLETVILFVSVFLV) traverse the membrane as a helical segment. The Cytoplasmic portion of the chain corresponds to 380–389 (NYLIQDGATH). Residues 390–410 (WLEGVQLLALYAIVVLAFFYY) form a helical membrane-spanning segment. Residues 411 to 412 (PQ) are Lumenal-facing.

Belongs to the Ca(2+):cation antiporter (CaCA) (TC 2.A.19) family.

Its subcellular location is the vacuole membrane. It localises to the endoplasmic reticulum membrane. Has a role in promoting intracellular calcium ion sequestration via the exchange of calcium ions for hydrogen ions across the vacuolar membrane. Involved also in manganese ion homeostasis via its uptake into the vacuole. The chain is Vacuolar calcium ion transporter (vcx1) from Schizosaccharomyces pombe (strain 972 / ATCC 24843) (Fission yeast).